Consider the following 302-residue polypeptide: 4-hydroxy-tetrahydrodipicolinate synthase (302 aa).

Threonine 50 contacts pyruvate. Catalysis depends on tyrosine 138, which acts as the Proton donor/acceptor. Catalysis depends on lysine 167, which acts as the Schiff-base intermediate with substrate. Residue valine 209 participates in pyruvate binding.

This sequence belongs to the DapA family. As to quaternary structure, homotetramer; dimer of dimers.

The protein localises to the cytoplasm. The enzyme catalyses L-aspartate 4-semialdehyde + pyruvate = (2S,4S)-4-hydroxy-2,3,4,5-tetrahydrodipicolinate + H2O + H(+). The protein operates within amino-acid biosynthesis; L-lysine biosynthesis via DAP pathway; (S)-tetrahydrodipicolinate from L-aspartate: step 3/4. Functionally, catalyzes the condensation of (S)-aspartate-beta-semialdehyde [(S)-ASA] and pyruvate to 4-hydroxy-tetrahydrodipicolinate (HTPA). The polypeptide is 4-hydroxy-tetrahydrodipicolinate synthase (Salinibacter ruber (strain DSM 13855 / M31)).